The following is a 148-amino-acid chain: MQLSRALYRNLNTRHWNRRIWEVGYRGPILPQQKATGRPDYPVSANRVNILRERLAREQIVMNLLTRPYSTAYAELTYLETEKNVKSLEELRAKEYKKLDEQRMPGKPKNTEGSKSTIRKKANVGNLLHTHTTVEDSLAGLAARKRWD.

Over residues Lys97–Glu112 the composition is skewed to basic and acidic residues. Residues Lys97–Asn126 form a disordered region.

This is an uncharacterized protein from Caenorhabditis elegans.